Here is a 99-residue protein sequence, read N- to C-terminus: Small ribosomal subunit protein eS24 (99 aa).

Belongs to the eukaryotic ribosomal protein eS24 family. In terms of assembly, may be present in 2 copies per 70S ribosome. Part of the 30S ribosomal subunit, where it binds 16S rRNA at its canonical site at the bse of the body, as well as a possible second 50S binding site near 23S rRNA helix 45.

The sequence is that of Small ribosomal subunit protein eS24 from Pyrococcus furiosus (strain ATCC 43587 / DSM 3638 / JCM 8422 / Vc1).